A 203-amino-acid polypeptide reads, in one-letter code: Urease accessory protein UreG (203 aa).

11 to 18 (GPVGSGKT) lines the GTP pocket.

The protein belongs to the SIMIBI class G3E GTPase family. UreG subfamily. Homodimer. UreD, UreF and UreG form a complex that acts as a GTP-hydrolysis-dependent molecular chaperone, activating the urease apoprotein by helping to assemble the nickel containing metallocenter of UreC. The UreE protein probably delivers the nickel.

Its subcellular location is the cytoplasm. Facilitates the functional incorporation of the urease nickel metallocenter. This process requires GTP hydrolysis, probably effectuated by UreG. The protein is Urease accessory protein UreG of Prochlorococcus marinus (strain AS9601).